A 357-amino-acid chain; its full sequence is DNA integrity scanning protein DisA (357 aa).

Residues 8 to 146 (VKSMINILQL…GNLRYTLKDI (139 aa)) enclose the DAC domain. ATP is bound by residues Gly-75, Leu-93, and 106–110 (MRHRT).

It belongs to the DisA family. In terms of assembly, homooctamer. Requires Mg(2+) as cofactor.

The enzyme catalyses 2 ATP = 3',3'-c-di-AMP + 2 diphosphate. Its function is as follows. Participates in a DNA-damage check-point that is active prior to asymmetric division when DNA is damaged. DisA forms globular foci that rapidly scan along the chromosomes during sporulation, searching for lesions. When a lesion is present, DisA pauses at the lesion site. This triggers a cellular response that culminates in a temporary block in sporulation initiation. Also has diadenylate cyclase activity, catalyzing the condensation of 2 ATP molecules into cyclic di-AMP (c-di-AMP). c-di-AMP acts as a signaling molecule that couples DNA integrity with progression of sporulation. The rise in c-di-AMP level generated by DisA while scanning the chromosome, operates as a positive signal that advances sporulation; upon encountering a lesion, the DisA focus arrests at the damaged site and halts c-di-AMP synthesis. The polypeptide is DNA integrity scanning protein DisA (Bacillus mycoides (strain KBAB4) (Bacillus weihenstephanensis)).